We begin with the raw amino-acid sequence, 476 residues long: Chromosomal replication initiator protein DnaA (476 aa).

Residues M1 to R75 form a domain I, interacts with DnaA modulators region. Residues R75–T139 are domain II. Residues F110 to L141 are disordered. A compositionally biased stretch (basic and acidic residues) spans A120 to P138. A domain III, AAA+ region region spans residues R140–S356. ATP is bound by residues G184, G186, K187, and T188. The segment at R357 to G476 is domain IV, binds dsDNA.

This sequence belongs to the DnaA family. Oligomerizes as a right-handed, spiral filament on DNA at oriC.

It localises to the cytoplasm. Functionally, plays an essential role in the initiation and regulation of chromosomal replication. ATP-DnaA binds to the origin of replication (oriC) to initiate formation of the DNA replication initiation complex once per cell cycle. Binds the DnaA box (a 9 base pair repeat at the origin) and separates the double-stranded (ds)DNA. Forms a right-handed helical filament on oriC DNA; dsDNA binds to the exterior of the filament while single-stranded (ss)DNA is stabiized in the filament's interior. The ATP-DnaA-oriC complex binds and stabilizes one strand of the AT-rich DNA unwinding element (DUE), permitting loading of DNA polymerase. After initiation quickly degrades to an ADP-DnaA complex that is not apt for DNA replication. Binds acidic phospholipids. The sequence is that of Chromosomal replication initiator protein DnaA from Nitrosospira multiformis (strain ATCC 25196 / NCIMB 11849 / C 71).